Here is a 218-residue protein sequence, read N- to C-terminus: Twisted gastrulation protein homolog 1-B (218 aa).

The first 25 residues, 1–25 (MKPSFLHIPAAALLLCSLWILPIHC), serve as a signal peptide directing secretion. N-linked (GlcNAc...) asparagine glycosylation is found at Asn52, Asn81, and Asn147.

The protein belongs to the twisted gastrulation protein family. As to quaternary structure, binds directly to bmp2, bmp4 and bmp7 and can form a ternary complex with bmps and chordin, thus preventing the binding of bmps to their cell surface receptors.

The protein resides in the secreted. Functionally, involved in dorsal-ventral patterning, permitting peak BMP signaling by antagonizing the residual anti-BMP activity of the cleavage products of chrd. Functions to promote the formation of ventral mesoderm by increasing the activity of bmp7 and other BMPS. Seems to antagonize BMP signaling by forming ternary complexes with chrd and BMPs, thereby preventing BMPs from binding to their receptors. In addition to the anti-BMP function, also has pro-BMP activity, partly mediated by cleavage and degradation of chrd, which releases BMPs from ternary complexes. May be an important modulator of BMP-regulated cartilage development and chondrocyte differentiation. The protein is Twisted gastrulation protein homolog 1-B (twsg1-b) of Xenopus laevis (African clawed frog).